Reading from the N-terminus, the 217-residue chain is Resolvase homolog YneB (217 aa).

The 146-residue stretch at 2-147 (KALIYARVST…RGMKRAVKNG (146 aa)) folds into the Resolvase/invertase-type recombinase catalytic domain. Ser-10 acts as the O-(5'-phospho-DNA)-serine intermediate in catalysis.

Belongs to the site-specific recombinase resolvase family.

In Bacillus subtilis (strain 168), this protein is Resolvase homolog YneB (yneB).